The following is an 828-amino-acid chain: Protein ELFN1 (828 aa).

The signal sequence occupies residues 1 to 25; it reads MAGHGWGTAWVLVAAATLLHAGGLA. The Extracellular segment spans residues 26–418; sequence QGDCWLIEGD…VPSPSTATHY (393 aa). LRR repeat units lie at residues 61 to 82, 85 to 106, 109 to 130, 133 to 154, and 157 to 178; these read TIVD…SLSR, NLTY…AFSG, NLQV…MLRG, KLEY…AFWE, and NIVN…TFAG. Asn85, Asn90, and Asn122 each carry an N-linked (GlcNAc...) asparagine glycan. The 64-residue stretch at 190–253 folds into the LRRCT domain; the sequence is NPFYCSCELL…LSKLQSVCTE (64 aa). An N-linked (GlcNAc...) asparagine glycan is attached at Asn210. A disordered region spans residues 258-293; the sequence is AEVLGPPRPVPGRSQPGHSPPPPPPEPSDMPCADDE. A compositionally biased stretch (pro residues) spans 275–285; sequence HSPPPPPPEPS. In terms of domain architecture, Fibronectin type-III spans 312 to 399; it reads QTEARPSMKV…HNHTCLTICL (88 aa). A glycan (N-linked (GlcNAc...) asparagine) is linked at Asn376. The chain crosses the membrane as a helical span at residues 419–439; it reads IMTILGCLFGMVLVLGAVYYC. At 440–828 the chain is on the cytoplasmic side; it reads LRKRRRQEEK…WKGVSAQHKS (389 aa). 2 positions are modified to phosphoserine: Ser460 and Ser646. Disordered regions lie at residues 627 to 674 and 697 to 731; these read HHSV…IEKS and KSRQ…GLGG. Positions 638-652 are enriched in low complexity; that stretch reads RASTSSSGSARSPRT. Residues 697 to 706 are compositionally biased toward basic and acidic residues; the sequence is KSRQYGEHRH. The span at 714-725 shows a compositional bias: pro residues; it reads AEPPAPPPPPPT.

As to quaternary structure, interacts with PPP1CA. As to expression, selectively expressed in perialvear somatostatin (Sst)-containing interneurons.

Its subcellular location is the membrane. It is found in the cell projection. The protein resides in the dendrite. Functionally, postsynaptic protein that regulates circuit dynamics in the central nervous system by modulating the temporal dynamics of interneuron recruitment. Specifically present in excitatory synapses onto oriens-lacunosum molecular (OLM) interneurons and acts as a regulator of presynaptic release probability to direct the formation of highly facilitating pyramidal-OLM synapses. Inhibits phosphatase activity of protein phosphatase 1 (PP1) complexes. This chain is Protein ELFN1 (Elfn1), found in Mus musculus (Mouse).